A 61-amino-acid chain; its full sequence is Small ribosomal subunit protein uS14 (61 aa).

Positions 24, 27, 40, and 43 each coordinate Zn(2+).

This sequence belongs to the universal ribosomal protein uS14 family. Zinc-binding uS14 subfamily. As to quaternary structure, part of the 30S ribosomal subunit. Contacts proteins S3 and S10. It depends on Zn(2+) as a cofactor.

Its function is as follows. Binds 16S rRNA, required for the assembly of 30S particles and may also be responsible for determining the conformation of the 16S rRNA at the A site. The sequence is that of Small ribosomal subunit protein uS14 from Clostridium botulinum (strain 657 / Type Ba4).